Here is a 238-residue protein sequence, read N- to C-terminus: Fatty acid metabolism regulator protein (238 aa).

Residues 6–74 (KGPASFAEKY…HGKPTRVNNF (69 aa)) enclose the HTH gntR-type domain. Positions 34–53 (ERELSELIGVTRTTLREVLQ) form a DNA-binding region, H-T-H motif.

As to quaternary structure, homodimer.

The protein resides in the cytoplasm. In terms of biological role, multifunctional regulator of fatty acid metabolism. The protein is Fatty acid metabolism regulator protein of Shewanella baltica (strain OS223).